A 317-amino-acid chain; its full sequence is 17-beta-hydroxysteroid dehydrogenase type 6 (317 aa).

Positions 1-17 (MWLYLAAFVGLYYLLHW) are cleaved as a signal peptide. 33-57 (FITGCDSGFGNLLARQLDARGLRVL) contacts NAD(+). Residue asparagine 161 is glycosylated (N-linked (GlcNAc...) asparagine). Serine 164 lines the substrate pocket. Tyrosine 176 acts as the Proton acceptor in catalysis. Asparagine 215 and asparagine 256 each carry an N-linked (GlcNAc...) asparagine glycan.

The protein belongs to the short-chain dehydrogenases/reductases (SDR) family. As to expression, detected in liver and prostate (at protein level). Detected in adult liver, lung, brain, placenta, prostate, adrenal gland, testis, mammary gland, spleen, spinal cord and uterus. Detected in caudate nucleus, and at lower levels in amygdala, corpus callosum, hippocampus, substantia nigra and thalamus. Detected in fetal lung, liver and brain.

The protein resides in the microsome membrane. It is found in the early endosome membrane. The catalysed reaction is all-trans-retinol--[retinol-binding protein] + NAD(+) = all-trans-retinal--[retinol-binding protein] + NADH + H(+). The enzyme catalyses all-trans-retinol + NAD(+) = all-trans-retinal + NADH + H(+). It catalyses the reaction androsterone + NAD(+) = 5alpha-androstan-3,17-dione + NADH + H(+). It carries out the reaction testosterone + NAD(+) = androst-4-ene-3,17-dione + NADH + H(+). The catalysed reaction is 5alpha-androstane-3alpha,17beta-diol + NAD(+) = 17beta-hydroxy-5alpha-androstan-3-one + NADH + H(+). The enzyme catalyses 17beta-estradiol + NAD(+) = estrone + NADH + H(+). It catalyses the reaction 17beta-estradiol + NADP(+) = estrone + NADPH + H(+). It carries out the reaction 3alpha-hydroxy-5alpha-pregnan-20-one + NAD(+) = 5alpha-pregnane-3,20-dione + NADH + H(+). The catalysed reaction is 5alpha-androstane-3beta,17beta-diol + NAD(+) = 17beta-hydroxy-5alpha-androstan-3-one + NADH + H(+). The enzyme catalyses 3beta-hydroxy-5alpha-androstan-17-one + NAD(+) = 5alpha-androstan-3,17-dione + NADH + H(+). Functionally, NAD-dependent oxidoreductase with broad substrate specificity that shows both oxidative and reductive activity (in vitro). Has 17-beta-hydroxysteroid dehydrogenase activity towards various steroids (in vitro). Converts 5-alpha-androstan-3-alpha,17-beta-diol to androsterone and estradiol to estrone (in vitro). Has 3-alpha-hydroxysteroid dehydrogenase activity towards androsterone (in vitro). Has retinol dehydrogenase activity towards all-trans-retinol (in vitro). Can convert androsterone to epi-androsterone. Androsterone is first oxidized to 5-alpha-androstane-3,17-dione and then reduced to epi-andosterone. Can act on both C-19 and C-21 3-alpha-hydroxysteroids. This chain is 17-beta-hydroxysteroid dehydrogenase type 6 (HSD17B6), found in Homo sapiens (Human).